We begin with the raw amino-acid sequence, 116 residues long: Large ribosomal subunit protein uL18 (116 aa).

This sequence belongs to the universal ribosomal protein uL18 family. As to quaternary structure, part of the 50S ribosomal subunit; part of the 5S rRNA/L5/L18/L25 subcomplex. Contacts the 5S and 23S rRNAs.

In terms of biological role, this is one of the proteins that bind and probably mediate the attachment of the 5S RNA into the large ribosomal subunit, where it forms part of the central protuberance. This chain is Large ribosomal subunit protein uL18, found in Shewanella baltica (strain OS223).